The following is a 623-amino-acid chain: MKTCYYDLLEVRSDASDLDLKKAYRRKALQYHPDKNPDNVEEATTIFAEIRAAYEVLSDPQERAWYDSHKEQILSDTPLNPNDEDDDYVVDSTVTGVTTEELMMFFNSSLYTSIDNSPAGFYQIAGKVFAKIAKDEVSWGLRLGLDGYKNYKDMEFEEHINSRGYILACDSSKANLSNLLFPIFGYSSTSYEELKLFYTKWSSFNTLKSFTWKDEYMYSRNYDRRTKREINKRNEKARAKAKEEYIKTVKRYVNFIKKLDQRMKEGAKKAAEKRLADERLRKENEMKLRKERLNNEQGAQFHLQSWQTIDQENWKELEKQYEKEFEKRNVDKDDELIGHEFTKNQFQTNNNSQHEDVDEIIIYDCFICKKSFKSEKQLENHIKTKLHKRNLDRVQKEMKKDSMALGLDELSDYNDFDSAESETEKLYSGMDLNDIDAELKKIEEQLAQSSVTDSEDFTDDNNDTEDQNSLVDKLSNTNYDIEIDDEINDDTNEEVQISGADNSETQNAEQDHDSNGDSEEEKEDELTRILRELEESKTSRSNFSDSDEEWSNKKKTKAKKKKNKANTPDKQPVTANKNDAKEVCGECRAEFESRNQLFSHIQTEGHVSPLSKVKKGKRSKKNK.

The J domain maps to 4–70; sequence CYYDLLEVRS…QERAWYDSHK (67 aa). The C2H2-type zinc-finger motif lies at 363–387; that stretch reads YDCFICKKSFKSEKQLENHIKTKLH. 3 disordered regions span residues 448–476, 499–581, and 599–623; these read QSSV…KLSN, GADN…NDAK, and SHIQ…KKNK. Acidic residues predominate over residues 453–466; it reads DSEDFTDDNNDTED. Positions 499–508 are enriched in polar residues; the sequence is GADNSETQNA. Residues 525–538 are compositionally biased toward basic and acidic residues; sequence ELTRILRELEESKT. Basic residues-rich tracts occupy residues 553 to 564 and 612 to 623; these read KKKTKAKKKKNK and KVKKGKRSKKNK.

It localises to the nucleus. Its function is as follows. Acts as a negative regulator of fluconazole resistance, primarily through down-regulation of the ABC transporter gene CDR1 via inactivation of the PDR1 transcriptional pathway. The chain is Negative regulator of PDR1-mediated fluconazole resistance JJJ1 from Candida glabrata (strain ATCC 2001 / BCRC 20586 / JCM 3761 / NBRC 0622 / NRRL Y-65 / CBS 138) (Yeast).